We begin with the raw amino-acid sequence, 528 residues long: MAATKASTATDEPVKRTATKSPAASASGAKTGAKRTAAKSASGSPPAKRATKPAARSVKPASAPQDTTTSTIPKRKTRAAAKSAAAKAPSARGHATKPRAPKDAQHEAATDPEDALDSVEELDAEPDLDVEPGEDLDLDAADLNLDDLEDDVAPDADDDLDSGDDEDHEDLEAEAAVAPGQTADDDEEIAEPTEKDKASGDFVWDEDESEALRQARKDAELTASADSVRAYLKQIGKVALLNAEEEVELAKRIEAGLYATQLMTELSERGEKLPAAQRRDMMWICRDGDRAKNHLLEANLRLVVSLAKRYTGRGMAFLDLIQEGNLGLIRAVEKFDYTKGYKFSTYATWWIRQAITRAMADQARTIRIPVHMVEVINKLGRIQRELLQDLGREPTPEELAKEMDITPEKVLEIQQYAREPISLDQTIGDEGDSQLGDFIEDSEAVVAVDAVSFTLLQDQLQSVLDTLSEREAGVVRLRFGLTDGQPRTLDEIGQVYGVTRERIRQIESKTMSKLRHPSRSQVLRDYLD.

Residues 1 to 10 (MAATKASTAT) are compositionally biased toward polar residues. A disordered region spans residues 1 to 211 (MAATKASTAT…FVWDEDESEA (211 aa)). 3 stretches are compositionally biased toward low complexity: residues 19–31 (TKSP…GAKT), 38–56 (AKSA…PAAR), and 80–92 (AAKS…PSAR). Over residues 100–109 (APKDAQHEAA) the composition is skewed to basic and acidic residues. Residues 110 to 173 (TDPEDALDSV…DDEDHEDLEA (64 aa)) show a composition bias toward acidic residues. The tract at residues 295-365 (LLEANLRLVV…TRAMADQART (71 aa)) is sigma-70 factor domain-2. The short motif at 319 to 322 (DLIQ) is the Interaction with polymerase core subunit RpoC element. A sigma-70 factor domain-3 region spans residues 374–450 (EVINKLGRIQ…DSEAVVAVDA (77 aa)). Residues 463–516 (VLDTLSEREAGVVRLRFGLTDGQPRTLDEIGQVYGVTRERIRQIESKTMSKLRH) are sigma-70 factor domain-4. Positions 489 to 508 (LDEIGQVYGVTRERIRQIES) form a DNA-binding region, H-T-H motif.

The protein belongs to the sigma-70 factor family. RpoD/SigA subfamily. Interacts transiently with the RNA polymerase catalytic core.

The protein resides in the cytoplasm. Its function is as follows. Sigma factors are initiation factors that promote the attachment of RNA polymerase to specific initiation sites and are then released. This sigma factor is the primary sigma factor during exponential growth. This Mycobacterium bovis (strain ATCC BAA-935 / AF2122/97) protein is RNA polymerase sigma factor SigA.